A 64-amino-acid polypeptide reads, in one-letter code: Large ribosomal subunit protein bL33 (64 aa).

The protein belongs to the bacterial ribosomal protein bL33 family.

The chain is Large ribosomal subunit protein bL33 from Prochlorococcus marinus (strain MIT 9313).